Here is a 1642-residue protein sequence, read N- to C-terminus: DNA-directed RNA polymerase I subunit RPA1 (1642 aa).

Zn(2+) contacts are provided by C66, C69, C75, and H78. Mg(2+) is bound by residues D565, D567, and D569. Residues 939–951 (PQDFFFHCMAGRE) are bridging helix. The disordered stretch occupies residues 1337–1428 (DADKDDDNDL…GNDNDGDDKA (92 aa)). Acidic residues predominate over residues 1340–1350 (KDDDNDLDNGD). Basic and acidic residues predominate over residues 1351 to 1361 (EVGRSKAKAND). Composition is skewed to acidic residues over residues 1362–1373 (DDSSDDNDDDDA) and 1386–1424 (KDYD…DNDG). Residues S1364 and S1365 each carry the phosphoserine modification.

The protein belongs to the RNA polymerase beta' chain family. Component of the RNA polymerase I (Pol I) complex consisting of at least 13 subunits. Phosphorylated.

The protein resides in the nucleus. The protein localises to the nucleolus. The catalysed reaction is RNA(n) + a ribonucleoside 5'-triphosphate = RNA(n+1) + diphosphate. DNA-dependent RNA polymerase catalyzes the transcription of DNA into RNA using the four ribonucleoside triphosphates as substrates. Largest and catalytic core component of RNA polymerase I which synthesizes ribosomal RNA precursors. Forms the polymerase active center together with the second largest subunit. A single stranded DNA template strand of the promoter is positioned within the central active site cleft of Pol I. A bridging helix emanates from RPA1 and crosses the cleft near the catalytic site and is thought to promote translocation of Pol I by acting as a ratchet that moves the RNA-DNA hybrid through the active site by switching from straight to bent conformations at each step of nucleotide addition. The protein is DNA-directed RNA polymerase I subunit RPA1 (RpI1) of Drosophila melanogaster (Fruit fly).